The primary structure comprises 338 residues: Eukaryotic translation initiation factor 3 subunit H (338 aa).

One can recognise an MPN domain in the interval 22-154; sequence VQCDGLAVMK…LKAYRLTPQA (133 aa).

This sequence belongs to the eIF-3 subunit H family. As to quaternary structure, component of the eukaryotic translation initiation factor 3 (eIF-3) complex. The eIF-3 complex interacts with pix. Interacts with mxt.

Its subcellular location is the cytoplasm. Its function is as follows. Component of the eukaryotic translation initiation factor 3 (eIF-3) complex, which is involved in protein synthesis of a specialized repertoire of mRNAs and, together with other initiation factors, stimulates binding of mRNA and methionyl-tRNAi to the 40S ribosome. The eIF-3 complex specifically targets and initiates translation of a subset of mRNAs involved in cell proliferation. The chain is Eukaryotic translation initiation factor 3 subunit H from Drosophila yakuba (Fruit fly).